Reading from the N-terminus, the 471-residue chain is Mixed lineage kinase domain-like protein (471 aa).

Residues 1-149 (MENLKHIITL…DADEDRRAFQ (149 aa)) form an N-terminal bundle and brace (NBB); mediates INSP6 binding region. Residues 55–84 (SEKLTTAMNRFKAALEEANGEIEKFSNRSN) are a coiled coil. The residue at position 125 (Ser-125) is a Phosphoserine. Residues 139 to 180 (QDADEDRRAFQMLRRDNEKIEASLRRLEINMKEIKETLRQYL) adopt a coiled-coil conformation. In terms of domain architecture, Protein kinase spans 194 to 469 (KEIKKEQLSG…DEILKKLSTF (276 aa)). ATP is bound by residues 209–217 (LRENEVSTL) and Lys-230. Thr-357 carries the phosphothreonine; by RIPK3 modification. 2 positions are modified to phosphoserine; by RIPK3: Ser-358 and Ser-360.

The protein belongs to the protein kinase superfamily. As to quaternary structure, homooligomer. Homotrimer; forms homotrimers on necroptosis induction. Upon TNF-induced necrosis, forms in complex with PGAM5, RIPK1 and RIPK3. Within this complex, may play a role in the proper targeting of RIPK1-RIPK3 to its downstream effector PGAM5. Interacts with RIPK3; the interaction is direct and promotes its phosphorylation and subsequent activation. Post-translationally, phosphorylation by RIPK3 induces a conformational switch that is required for necroptosis. It also induces homotrimerization and localization to the plasma membrane.

The protein localises to the cytoplasm. It is found in the cell membrane. It localises to the nucleus. Activated via binding to highly phosphorylated inositol phosphates such as inositolhexakisphosphate (InsP6) which mediates the release of an N-terminal auto-inhibitory region. Activation requires not only RIPK3-dependent phosphorylation but also binding to highly phosphorylated inositol phosphates. Inhibited by necrosulfonamide, a specific inhibitor of necroptosis that targets Cys-86. Its function is as follows. Pseudokinase that plays a key role in TNF-induced necroptosis, a programmed cell death process. Does not have protein kinase activity. Activated following phosphorylation by RIPK3, leading to homotrimerization, localization to the plasma membrane and execution of programmed necrosis characterized by calcium influx and plasma membrane damage. In addition to TNF-induced necroptosis, necroptosis can also take place in the nucleus in response to orthomyxoviruses infection: following activation by ZBP1, MLKL is phosphorylated by RIPK3 in the nucleus, triggering disruption of the nuclear envelope and leakage of cellular DNA into the cytosol.following ZBP1 activation, which senses double-stranded Z-RNA structures, nuclear RIPK3 catalyzes phosphorylation and activation of MLKL, promoting disruption of the nuclear envelope and leakage of cellular DNA into the cytosol. Binds to highly phosphorylated inositol phosphates such as inositolhexakisphosphate (InsP6) which is essential for its necroptotic function. This chain is Mixed lineage kinase domain-like protein, found in Homo sapiens (Human).